We begin with the raw amino-acid sequence, 69 residues long: Large ribosomal subunit protein bL28 (69 aa).

The disordered stretch occupies residues 1–27 (MSRRCSVSGKGPLVGNNVSHANNKTKR).

It belongs to the bacterial ribosomal protein bL28 family.

The chain is Large ribosomal subunit protein bL28 from Sulfurovum sp. (strain NBC37-1).